The primary structure comprises 440 residues: MLSTVFRRTMATGRHFIAVCQMTSDNDLEKNFQAAKNMIERAGEKKCEMVFLPECFDFIGLNKNEQIDLAMATDCEYMEKYRELARKHNIWLSLGGLHHKDPSDAAHPWNTHLIIDSDGVTRAEYNKLHLFDLEIPGKVRLMESEFSKAGTEMIPPVDTPIGRLGLSICYDVRFPELSLWNRKRGAQLLSFPSAFTLNTGLAHWETLLRARAIENQCYVVAAAQTGAHNPKRQSYGHSMVVDPWGAVVAQCSERVDMCFAEIDLSYVDTLREMQPVFSHRRSDLYTLHINEKSSETGGLKFARFNIPADHIFYSTPHSFVFVNLKPVTDGHVLVSPKRVVPRLTDLTDAETADLFIVAKKVQAMLEKHHNVTSTTICVQDGKDAGQTVPHVHIHILPRRAGDFGDNEIYQKLASHDKEPERKPRSNEQMAEEAVVYRNLM.

The CN hydrolase domain maps to Arg-14–Leu-264. Active-site residues include Glu-54, Lys-127, and Cys-169. The region spanning Gly-297–Asp-405 is the HIT domain. The Histidine triad motif motif lies at His-390–His-394. His-392 functions as the Tele-AMP-histidine intermediate in the catalytic mechanism.

In the N-terminal section; belongs to the UPF0012 family. In terms of assembly, homotetramer. Requires Mn(2+) as cofactor.

It catalyses the reaction P(1),P(3)-bis(5'-adenosyl) triphosphate + H2O = AMP + ADP + 2 H(+). Its function is as follows. Cleaves A-5'-PPP-5'A to yield AMP and ADP. This Caenorhabditis elegans protein is Nitrilase and fragile histidine triad fusion protein NitFhit.